The chain runs to 201 residues: Transgelin (201 aa).

N-acetylalanine is present on Ala-2. The Calponin-homology (CH) domain occupies Glu-24–Ala-137. Position 166 is a phosphoserine (Ser-166). Lys-172 carries the N6-acetyllysine modification. Residues Ile-175 to Ile-200 form a Calponin-like repeat. At Ser-181 the chain carries Phosphoserine. Residue Arg-183 is modified to Omega-N-methylarginine.

This sequence belongs to the calponin family.

The protein resides in the cytoplasm. Its function is as follows. Actin cross-linking/gelling protein. Involved in calcium interactions and contractile properties of the cell that may contribute to replicative senescence. In Homo sapiens (Human), this protein is Transgelin (TAGLN).